Consider the following 503-residue polypeptide: Lysine--tRNA ligase (503 aa).

Glutamate 414 and glutamate 421 together coordinate Mg(2+).

It belongs to the class-II aminoacyl-tRNA synthetase family. As to quaternary structure, homodimer. It depends on Mg(2+) as a cofactor.

The protein resides in the cytoplasm. The enzyme catalyses tRNA(Lys) + L-lysine + ATP = L-lysyl-tRNA(Lys) + AMP + diphosphate. This chain is Lysine--tRNA ligase, found in Neisseria meningitidis serogroup A / serotype 4A (strain DSM 15465 / Z2491).